The sequence spans 427 residues: Terminal nucleotidyltransferase 5B (427 aa).

The interval 1 to 49 (MMPSESGAESLEQPAAQVGTGAASAVATAGAAGGGPDPEASSASLGRHQ) is disordered. Residues 15 to 30 (AAQVGTGAASAVATAG) show a composition bias toward low complexity.

The protein belongs to the TENT family.

It is found in the cytoplasm. The protein resides in the nucleus. The enzyme catalyses RNA(n) + ATP = RNA(n)-3'-adenine ribonucleotide + diphosphate. Its function is as follows. Catalyzes the transfer of one adenosine molecule from an ATP to an mRNA poly(A) tail bearing a 3'-OH terminal group in an ATP hydrolysis-dependent manner. May be involved in maintaining the translation efficiency of at least some genes through preventing degradation of their mRNAs. Prefers RNA molecules that are adenosine-rich close to 3'-end. In addition, may inhibit cell proliferation and cell cycle progression through ubiquitination of beta-catenin/CTNNB1. The polypeptide is Terminal nucleotidyltransferase 5B (Mus musculus (Mouse)).